Here is a 520-residue protein sequence, read N- to C-terminus: Maturase K (520 aa).

This sequence belongs to the intron maturase 2 family. MatK subfamily.

It localises to the plastid. Its subcellular location is the chloroplast. Functionally, usually encoded in the trnK tRNA gene intron. Probably assists in splicing its own and other chloroplast group II introns. The protein is Maturase K of Beaucarnea recurvata (Elephant-foot tree).